The chain runs to 400 residues: Enolase (400 aa).

Q153 is a binding site for (2R)-2-phosphoglycerate. E195 (proton donor) is an active-site residue. The Mg(2+) site is built by D231, E274, and D301. Positions 326, 355, 356, and 377 each coordinate (2R)-2-phosphoglycerate. K326 acts as the Proton acceptor in catalysis.

The protein belongs to the enolase family. It depends on Mg(2+) as a cofactor.

The protein resides in the cytoplasm. It is found in the secreted. It localises to the cell surface. It catalyses the reaction (2R)-2-phosphoglycerate = phosphoenolpyruvate + H2O. It participates in carbohydrate degradation; glycolysis; pyruvate from D-glyceraldehyde 3-phosphate: step 4/5. Functionally, catalyzes the reversible conversion of 2-phosphoglycerate (2-PG) into phosphoenolpyruvate (PEP). It is essential for the degradation of carbohydrates via glycolysis. This Halorubrum lacusprofundi (strain ATCC 49239 / DSM 5036 / JCM 8891 / ACAM 34) protein is Enolase.